A 139-amino-acid chain; its full sequence is Putative pre-16S rRNA nuclease (139 aa).

Belongs to the YqgF nuclease family.

The protein localises to the cytoplasm. Could be a nuclease involved in processing of the 5'-end of pre-16S rRNA. The chain is Putative pre-16S rRNA nuclease from Streptococcus pyogenes serotype M2 (strain MGAS10270).